Reading from the N-terminus, the 286-residue chain is Tungstate-binding protein TupA (286 aa).

The N-terminal stretch at 1-20 is a signal peptide; the sequence is MKRLLSIITAVMMLALALTG. Cys-21 is lipidated: N-palmitoyl cysteine. Residue Cys-21 is the site of S-diacylglycerol cysteine attachment.

Monomer. The complex is composed of two ATP-binding proteins (TupC), two transmembrane proteins (TupB) and a solute-binding protein (TupA).

It localises to the cell membrane. In terms of biological role, part of an ABC transporter complex involved in tungstate uptake. Specifically binds tungstate. The polypeptide is Tungstate-binding protein TupA (Peptoclostridium acidaminophilum (Eubacterium acidaminophilum)).